The primary structure comprises 807 residues: Glycerol-3-phosphate acyltransferase (807 aa).

The short motif at 308 to 313 (CHRSHM) is the HXXXXD motif element.

The protein belongs to the GPAT/DAPAT family.

It is found in the cell inner membrane. The enzyme catalyses sn-glycerol 3-phosphate + an acyl-CoA = a 1-acyl-sn-glycero-3-phosphate + CoA. Its pathway is phospholipid metabolism; CDP-diacylglycerol biosynthesis; CDP-diacylglycerol from sn-glycerol 3-phosphate: step 1/3. The sequence is that of Glycerol-3-phosphate acyltransferase from Shewanella putrefaciens (strain CN-32 / ATCC BAA-453).